The following is a 545-amino-acid chain: 2-succinyl-5-enolpyruvyl-6-hydroxy-3-cyclohexene-1-carboxylate synthase (545 aa).

Polar residues predominate over residues 170-185 (QVSGLQRSAPAPSSDS). Residues 170–193 (QVSGLQRSAPAPSSDSPLGAAPQL) form a disordered region.

Belongs to the TPP enzyme family. MenD subfamily. In terms of assembly, homodimer. Requires Mg(2+) as cofactor. Mn(2+) is required as a cofactor. The cofactor is thiamine diphosphate.

The enzyme catalyses isochorismate + 2-oxoglutarate + H(+) = 5-enolpyruvoyl-6-hydroxy-2-succinyl-cyclohex-3-ene-1-carboxylate + CO2. Its pathway is quinol/quinone metabolism; 1,4-dihydroxy-2-naphthoate biosynthesis; 1,4-dihydroxy-2-naphthoate from chorismate: step 2/7. The protein operates within cofactor biosynthesis; phylloquinone biosynthesis. Catalyzes the thiamine diphosphate-dependent decarboxylation of 2-oxoglutarate and the subsequent addition of the resulting succinic semialdehyde-thiamine pyrophosphate anion to isochorismate to yield 2-succinyl-5-enolpyruvyl-6-hydroxy-3-cyclohexene-1-carboxylate (SEPHCHC). In Parasynechococcus marenigrum (strain WH8102), this protein is 2-succinyl-5-enolpyruvyl-6-hydroxy-3-cyclohexene-1-carboxylate synthase.